A 125-amino-acid polypeptide reads, in one-letter code: Small ribosomal subunit protein uS13 (125 aa).

The segment at 92 to 125 is disordered; it reads RRSLPARGQNTQTNARTRKGRRKTVAGKKKAVKK. The segment covering 107-125 has biased composition (basic residues); it reads RTRKGRRKTVAGKKKAVKK.

Belongs to the universal ribosomal protein uS13 family. In terms of assembly, part of the 30S ribosomal subunit. Forms a loose heterodimer with protein S19. Forms two bridges to the 50S subunit in the 70S ribosome.

Functionally, located at the top of the head of the 30S subunit, it contacts several helices of the 16S rRNA. In the 70S ribosome it contacts the 23S rRNA (bridge B1a) and protein L5 of the 50S subunit (bridge B1b), connecting the 2 subunits; these bridges are implicated in subunit movement. Contacts the tRNAs in the A and P-sites. This chain is Small ribosomal subunit protein uS13, found in Chlorobium phaeobacteroides (strain BS1).